The primary structure comprises 544 residues: Chaperonin GroEL (544 aa).

ATP is bound by residues 30-33 (TLGP), lysine 51, 87-91 (DGTTT), glycine 415, 481-483 (DAL), and aspartate 497.

Belongs to the chaperonin (HSP60) family. As to quaternary structure, forms a cylinder of 14 subunits composed of two heptameric rings stacked back-to-back. Interacts with the co-chaperonin GroES.

It is found in the cytoplasm. It carries out the reaction ATP + H2O + a folded polypeptide = ADP + phosphate + an unfolded polypeptide.. Functionally, together with its co-chaperonin GroES, plays an essential role in assisting protein folding. The GroEL-GroES system forms a nano-cage that allows encapsulation of the non-native substrate proteins and provides a physical environment optimized to promote and accelerate protein folding. This Chlamydia muridarum (strain MoPn / Nigg) protein is Chaperonin GroEL.